Consider the following 303-residue polypeptide: MEFIINKINNIKNNNDNNNNINNNSNNNNNNNNNSNNNKFKFKYEFEFGYCYDVNLYEWRFIQDYETVPLKLNGILSNDEYNSILNIIGDVYDKTDKYPHVTYLLSIIMMVLLCMLPSVMAIHSNLNSYIQFVLFDDIFILITFILIPFLFFLKKKVIIENNYVIKGLKNRSIKLNIEYYKFKLLYFFFLLLWVPQGFLQSLIYKKRVLNEDFFNLKISLFILLGIDLIFILFAIWNFLLFTKLNRFLIKDRRDENILITLNSNIKKFLSPMEFYLTCNNTLNFFLNNNDNHFFPIDLDDPNV.

The next 4 membrane-spanning stretches (helical) occupy residues 102-122 (TYLL…VMAI), 132-152 (FVLF…FLFF), 184-204 (LLYF…SLIY), and 221-241 (FILL…FLLF).

The protein resides in the membrane. This is an uncharacterized protein from Dictyostelium discoideum (Social amoeba).